The following is a 394-amino-acid chain: Saposin-like protein 11 (394 aa).

The signal sequence occupies residues 1–18; it reads MSVFRFLLFLSLLVGSNA. N-linked (GlcNAc...) asparagine glycans are attached at residues Asn25 and Asn272. The Saposin B-type domain maps to 306-394; sequence GNMVCDICEK…SFCKHVPFCK (89 aa). 3 disulfide bridges follow: Cys310–Cys393, Cys313–Cys387, and Cys343–Cys359.

In Caenorhabditis elegans, this protein is Saposin-like protein 11 (spp-11).